Reading from the N-terminus, the 181-residue chain is Putative manganese efflux pump MntP (181 aa).

6 consecutive transmembrane segments (helical) span residues 3-23, 42-62, 63-83, 101-121, 124-144, and 160-180; these read LIFL…ANGA, IFQA…VGFI, SYID…KMIK, LMLG…TFSF, INIA…CVIA, and LVLG…THLI.

The protein belongs to the MntP (TC 9.B.29) family.

It is found in the cell inner membrane. In terms of biological role, probably functions as a manganese efflux pump. The protein is Putative manganese efflux pump MntP of Campylobacter fetus subsp. fetus (strain 82-40).